A 753-amino-acid polypeptide reads, in one-letter code: Probable tubulin--tyrosine ligase PBY1 (753 aa).

Residues 343 to 734 (MEYIYKPLTH…PIFNENRNKT (392 aa)) form the TTL domain.

The protein belongs to the tubulin--tyrosine ligase family. Mg(2+) is required as a cofactor. It depends on K(+) as a cofactor.

It is found in the cytoplasm. The protein localises to the P-body. It catalyses the reaction C-terminal L-alpha-aminoacyl-L-glutamyl-L-glutamyl-[tubulin] + L-tyrosine + ATP = C-terminal L-alpha-aminoacyl-L-glutamyl-L-glutamyl-L-tyrosyl-[tubulin] + ADP + phosphate + H(+). In terms of biological role, probable P-body-associated tubulin--tyrosine ligase. This Saccharomyces cerevisiae (strain ATCC 204508 / S288c) (Baker's yeast) protein is Probable tubulin--tyrosine ligase PBY1 (PBY1).